The sequence spans 227 residues: Cytidylate kinase (227 aa).

10–18 (GPASSGKST) contributes to the ATP binding site.

Belongs to the cytidylate kinase family. Type 1 subfamily.

The protein localises to the cytoplasm. It carries out the reaction CMP + ATP = CDP + ADP. The catalysed reaction is dCMP + ATP = dCDP + ADP. This is Cytidylate kinase from Streptococcus agalactiae serotype Ia (strain ATCC 27591 / A909 / CDC SS700).